The sequence spans 388 residues: Isocitrate dehydrogenase [NAD] subunit 1, mitochondrial (388 aa).

The transit peptide at 1 to 35 directs the protein to the mitochondrion; sequence MFSLRTAQPAQSLFRAATNTYSTSLPRSAIAARSF. 3 residues coordinate substrate: R137, R168, and D255. D255 lines the Mg(2+) pocket.

The protein belongs to the isocitrate and isopropylmalate dehydrogenases family. In terms of assembly, octamer of two non-identical subunits IDH1 and IDH2. Requires Mg(2+) as cofactor. Mn(2+) serves as cofactor.

It localises to the mitochondrion. The catalysed reaction is D-threo-isocitrate + NAD(+) = 2-oxoglutarate + CO2 + NADH. Performs an essential role in the oxidative function of the citric acid cycle. The sequence is that of Isocitrate dehydrogenase [NAD] subunit 1, mitochondrial (IDH1) from Ajellomyces capsulatus (Darling's disease fungus).